Reading from the N-terminus, the 331-residue chain is Centriolar satellite-associated tubulin polyglutamylase complex regulator 1 (331 aa).

A required for interaction with PCM1 region spans residues 1–111 (MLSPERLALP…HCLLQLLCPD (111 aa)). A required for interaction with TPGS1, LRRC49, and TTLL1 region spans residues 1–225 (MLSPERLALP…SCPPPALVKE (225 aa)). A required for interaction with TPGS2 region spans residues 112–331 (FPLELTQKAA…STEETDESET (220 aa)). Residues 288–331 (SPEASCLPSRTPPRVGSPWRPLHHSRKVDGESDGSTEETDESET) are disordered. Residues 318–331 (ESDGSTEETDESET) are compositionally biased toward acidic residues. Ser-319 is subject to Phosphoserine.

It belongs to the CSTPP1 family. As to quaternary structure, interacts with PCM1. Interacts with TTLL1, TPGS1, TPGS2 and LRRC49; the interactions link CSTPP1 to the complex TPGC. Binds to alpha-tubulin.

It is found in the cytoplasm. Its subcellular location is the cytoskeleton. The protein resides in the microtubule organizing center. The protein localises to the centrosome. It localises to the centriolar satellite. Its function is as follows. Regulator of the tubulin polyglutamylase complex (TPGC) that controls cytoskeletal organization, nuclear shape, and cilium disassembly by balancing microtubule and actin assembly. Regulates the assembly and stability of the TPGC and thereby modulates polyglutamylation of the microtubule, which antagonizes MAP4 binding. This Homo sapiens (Human) protein is Centriolar satellite-associated tubulin polyglutamylase complex regulator 1.